The sequence spans 109 residues: Mannose-specific lectin (109 aa).

The 109-residue stretch at 1–109 (DNILYSSEVL…PPIWATGTGR (109 aa)) folds into the Bulb-type lectin domain. Cysteine 29 and cysteine 52 are joined by a disulfide. Residues 79–82 (TGTN) constitute a propeptide that is removed on maturation.

In terms of assembly, homotrimer or homotetramer.

The protein resides in the secreted. In terms of biological role, mannose-specific lectin. Shows agglutinating activity toward rabbit erythrocytes and mitogenic activity towards mouse lymphocytes. The sequence is that of Mannose-specific lectin from Aloe arborescens (Kidachi aloe).